The primary structure comprises 136 residues: Class I hydrophobin 16 (136 aa).

The signal sequence occupies residues 1–19 (MKFTSVIALVATAATLVGA). Cystine bridges form between cysteine 58–cysteine 115, cysteine 65–cysteine 109, cysteine 66–cysteine 99, and cysteine 116–cysteine 129. Asparagine 74 carries an N-linked (GlcNAc...) asparagine glycan.

It belongs to the fungal hydrophobin family. As to quaternary structure, self-assembles to form functional amyloid fibrils called rodlets. Self-assembly into fibrillar rodlets occurs spontaneously at hydrophobic:hydrophilic interfaces and the rodlets further associate laterally to form amphipathic monolayers.

It is found in the secreted. The protein localises to the cell wall. In terms of biological role, aerial growth, conidiation, and dispersal of filamentous fungi in the environment rely upon a capability of their secreting small amphipathic proteins called hydrophobins (HPBs) with low sequence identity. Class I can self-assemble into an outermost layer of rodlet bundles on aerial cell surfaces, conferring cellular hydrophobicity that supports fungal growth, development and dispersal; whereas Class II form highly ordered films at water-air interfaces through intermolecular interactions but contribute nothing to the rodlet structure. Hydph16 is a class I hydrophobin that has specific functions in aerial mycelium formation, cell wall stress protection, and cell wall structure formation, but does not seem to be involved in mycelial hydrophobicity. Specifically functions in resisting cell wall synthesis inhibitors. The sequence is that of Class I hydrophobin 16 from Pleurotus ostreatus (strain PC15) (Oyster mushroom).